The chain runs to 130 residues: S-adenosylmethionine decarboxylase proenzyme (130 aa).

The Schiff-base intermediate with substrate; via pyruvic acid role is filled by serine 66. Pyruvic acid (Ser); by autocatalysis is present on serine 66. Histidine 71 acts as the Proton acceptor; for processing activity in catalysis. Cysteine 86 acts as the Proton donor; for catalytic activity in catalysis.

Belongs to the prokaryotic AdoMetDC family. Type 1 subfamily. Heterotetramer of two alpha and two beta chains arranged as a dimer of alpha/beta heterodimers. It depends on pyruvate as a cofactor. Post-translationally, is synthesized initially as an inactive proenzyme. Formation of the active enzyme involves a self-maturation process in which the active site pyruvoyl group is generated from an internal serine residue via an autocatalytic post-translational modification. Two non-identical subunits are generated from the proenzyme in this reaction, and the pyruvate is formed at the N-terminus of the alpha chain, which is derived from the carboxyl end of the proenzyme. The post-translation cleavage follows an unusual pathway, termed non-hydrolytic serinolysis, in which the side chain hydroxyl group of the serine supplies its oxygen atom to form the C-terminus of the beta chain, while the remainder of the serine residue undergoes an oxidative deamination to produce ammonia and the pyruvoyl group blocking the N-terminus of the alpha chain.

The enzyme catalyses S-adenosyl-L-methionine + H(+) = S-adenosyl 3-(methylsulfanyl)propylamine + CO2. Its pathway is amine and polyamine biosynthesis; S-adenosylmethioninamine biosynthesis; S-adenosylmethioninamine from S-adenosyl-L-methionine: step 1/1. In terms of biological role, catalyzes the decarboxylation of S-adenosylmethionine to S-adenosylmethioninamine (dcAdoMet), the propylamine donor required for the synthesis of the polyamines spermine and spermidine from the diamine putrescine. In Bacillus cereus (strain ATCC 10987 / NRS 248), this protein is S-adenosylmethionine decarboxylase proenzyme.